The primary structure comprises 397 residues: MGKTIAINAGSSTLKFKLFEMPQERVIAQGAVERIGFKTSPVNIRYGVDHHYQEKAVVADHLAAVNIVLDELIKLRIIDSYDEITGVGHRVVAGGEQFHDSVLITDQVLKQITDLAEYAPLHNPANAVGIRAFKRVLPHVPAVAVFDTAFHASMPAVNYLYSLPYDYYQRYGARKFGAHGTSHRYVAVRAAKLLGRPLETLKLITLHLGAGSSITAIDHGQSLDTSMGFTPLAGITMATRSGDVDPSLVAYLMKKLNISDPDEMLTILNTQSGLLGLAGSADMQELEARYDEDSQAQLAIDIFVNRIVKYVGAYLAELQGADALVITAGIGERDARMRQRIADRLTYFGVAIDPTKNQVSGVERDLSTTDAKIRTLLIPTDEELMIARDVERVAQNQ.

Asparagine 8 provides a ligand contact to Mg(2+). Residue lysine 15 participates in ATP binding. Arginine 90 is a binding site for substrate. The active-site Proton donor/acceptor is aspartate 147. 207–211 (HLGAG) lines the ATP pocket. Glutamate 382 lines the Mg(2+) pocket.

Belongs to the acetokinase family. As to quaternary structure, homodimer. The cofactor is Mg(2+). Mn(2+) is required as a cofactor.

It localises to the cytoplasm. The catalysed reaction is acetate + ATP = acetyl phosphate + ADP. It participates in metabolic intermediate biosynthesis; acetyl-CoA biosynthesis; acetyl-CoA from acetate: step 1/2. Functionally, catalyzes the formation of acetyl phosphate from acetate and ATP. Can also catalyze the reverse reaction. This chain is Acetate kinase, found in Lactiplantibacillus plantarum (strain ATCC BAA-793 / NCIMB 8826 / WCFS1) (Lactobacillus plantarum).